The primary structure comprises 70 residues: Cold shock-like protein CspB (70 aa).

One can recognise a CSD domain in the interval 7–67 (GLVKWFDAGK…GQKGPSAVNV (61 aa)).

It localises to the cytoplasm. The chain is Cold shock-like protein CspB (cspB) from Yersinia enterocolitica.